A 133-amino-acid polypeptide reads, in one-letter code: Small ribosomal subunit protein uS8 (133 aa).

Belongs to the universal ribosomal protein uS8 family. In terms of assembly, part of the 30S ribosomal subunit. Contacts proteins S5 and S12.

One of the primary rRNA binding proteins, it binds directly to 16S rRNA central domain where it helps coordinate assembly of the platform of the 30S subunit. The chain is Small ribosomal subunit protein uS8 from Prochlorococcus marinus subsp. pastoris (strain CCMP1986 / NIES-2087 / MED4).